We begin with the raw amino-acid sequence, 361 residues long: Probable cysteine protease RD19B (361 aa).

The N-terminal stretch at 1–24 (MDYHLRVLFSVSLIFVFVSVSVCG) is a signal peptide. Positions 25–131 (DEDVLIRQVV…NQAPILPTQN (107 aa)) are cleaved as a propeptide — activation peptide. 2 disulfides stabilise this stretch: C153/C203 and C187/C237. C156 is an active-site residue. Residue N250 is glycosylated (N-linked (GlcNAc...) asparagine). A disulfide bridge links C293 with C347. Active-site residues include H299 and N326.

The protein belongs to the peptidase C1 family.

The protein resides in the lytic vacuole. In terms of biological role, probable thiol protease. This chain is Probable cysteine protease RD19B, found in Arabidopsis thaliana (Mouse-ear cress).